A 371-amino-acid chain; its full sequence is UDP-N-acetylglucosamine--N-acetylmuramyl-(pentapeptide) pyrophosphoryl-undecaprenol N-acetylglucosamine transferase (371 aa).

UDP-N-acetyl-alpha-D-glucosamine contacts are provided by residues 15–17 (TGG), Asn126, Arg172, Ser199, Ile256, 275–280 (ALTVSE), and Gln301.

It belongs to the glycosyltransferase 28 family. MurG subfamily.

The protein localises to the cell inner membrane. It catalyses the reaction di-trans,octa-cis-undecaprenyl diphospho-N-acetyl-alpha-D-muramoyl-L-alanyl-D-glutamyl-meso-2,6-diaminopimeloyl-D-alanyl-D-alanine + UDP-N-acetyl-alpha-D-glucosamine = di-trans,octa-cis-undecaprenyl diphospho-[N-acetyl-alpha-D-glucosaminyl-(1-&gt;4)]-N-acetyl-alpha-D-muramoyl-L-alanyl-D-glutamyl-meso-2,6-diaminopimeloyl-D-alanyl-D-alanine + UDP + H(+). Its pathway is cell wall biogenesis; peptidoglycan biosynthesis. Its function is as follows. Cell wall formation. Catalyzes the transfer of a GlcNAc subunit on undecaprenyl-pyrophosphoryl-MurNAc-pentapeptide (lipid intermediate I) to form undecaprenyl-pyrophosphoryl-MurNAc-(pentapeptide)GlcNAc (lipid intermediate II). This chain is UDP-N-acetylglucosamine--N-acetylmuramyl-(pentapeptide) pyrophosphoryl-undecaprenol N-acetylglucosamine transferase, found in Francisella tularensis subsp. tularensis (strain WY96-3418).